Reading from the N-terminus, the 305-residue chain is Putative ABC transporter molybdenum-binding protein HVO_B0369 (305 aa).

A signal peptide (tat-type signal) is located at residues 1–40 (MNPDSAAGRSSRRAFLAAVGGVAAGGLTATAGCLGRGEEA).

It belongs to the bacterial solute-binding protein 1 family. WtpA subfamily. As to quaternary structure, the complex is composed of two ATP-binding proteins, two transmembrane proteins (HVO_B0370) and a solute-binding protein (HVO_B0369). In terms of processing, predicted to be exported by the Tat system. The position of the signal peptide cleavage has not been experimentally proven.

Functionally, part of an ABC transporter complex involved in molybdenum import. The polypeptide is Putative ABC transporter molybdenum-binding protein HVO_B0369 (Haloferax volcanii (strain ATCC 29605 / DSM 3757 / JCM 8879 / NBRC 14742 / NCIMB 2012 / VKM B-1768 / DS2) (Halobacterium volcanii)).